Consider the following 819-residue polypeptide: Leucine--tRNA ligase (819 aa).

The 'HIGH' region motif lies at 42–53 (PYPSGAKLHIGH). Residues 578-582 (RMSKS) carry the 'KMSKS' region motif. Lys581 provides a ligand contact to ATP.

It belongs to the class-I aminoacyl-tRNA synthetase family.

It localises to the cytoplasm. It catalyses the reaction tRNA(Leu) + L-leucine + ATP = L-leucyl-tRNA(Leu) + AMP + diphosphate. This chain is Leucine--tRNA ligase, found in Caldanaerobacter subterraneus subsp. tengcongensis (strain DSM 15242 / JCM 11007 / NBRC 100824 / MB4) (Thermoanaerobacter tengcongensis).